A 498-amino-acid chain; its full sequence is Glycerol kinase (498 aa).

Residue Thr-11 coordinates ADP. Residues Thr-11, Ser-12, and Ser-13 each contribute to the ATP site. A sn-glycerol 3-phosphate-binding site is contributed by Thr-11. Arg-15 is an ADP binding site. Arg-81, Glu-82, Tyr-133, and Asp-242 together coordinate sn-glycerol 3-phosphate. Glycerol contacts are provided by Arg-81, Glu-82, Tyr-133, Asp-242, and Gln-243. Positions 264 and 307 each coordinate ADP. Residues Thr-264, Gly-307, Gln-311, and Gly-412 each contribute to the ATP site. ADP contacts are provided by Gly-412 and Asn-416.

Belongs to the FGGY kinase family.

The catalysed reaction is glycerol + ATP = sn-glycerol 3-phosphate + ADP + H(+). Its pathway is polyol metabolism; glycerol degradation via glycerol kinase pathway; sn-glycerol 3-phosphate from glycerol: step 1/1. Inhibited by fructose 1,6-bisphosphate (FBP). Functionally, key enzyme in the regulation of glycerol uptake and metabolism. Catalyzes the phosphorylation of glycerol to yield sn-glycerol 3-phosphate. The chain is Glycerol kinase from Delftia acidovorans (strain DSM 14801 / SPH-1).